Consider the following 301-residue polypeptide: Ribonuclease HIII (301 aa).

Positions 84–301 (ASAIGSDEVG…TEKAARIAKK (218 aa)) constitute an RNase H type-2 domain. Aspartate 90, glutamate 91, and aspartate 195 together coordinate a divalent metal cation.

The protein belongs to the RNase HII family. RnhC subfamily. The cofactor is Mn(2+). Requires Mg(2+) as cofactor.

The protein localises to the cytoplasm. It catalyses the reaction Endonucleolytic cleavage to 5'-phosphomonoester.. Endonuclease that specifically degrades the RNA of RNA-DNA hybrids. This Geobacillus sp. (strain WCH70) protein is Ribonuclease HIII.